A 576-amino-acid polypeptide reads, in one-letter code: Arginine--tRNA ligase (576 aa).

Residues 132 to 142 (ANPTGPMHIGH) carry the 'HIGH' region motif.

The protein belongs to the class-I aminoacyl-tRNA synthetase family. As to quaternary structure, monomer.

Its subcellular location is the cytoplasm. It catalyses the reaction tRNA(Arg) + L-arginine + ATP = L-arginyl-tRNA(Arg) + AMP + diphosphate. This is Arginine--tRNA ligase from Ehrlichia ruminantium (strain Gardel).